The following is a 243-amino-acid chain: MANVSMRDMLQAGVHFGHQTRYWNPKMKPFIFGARNKVHIINLEKTVPLFNNALNYIGSVASKKGKILFVGTKRAASDSVRDAAVKCDQFYVNKRWLGGMLTNWKTVRQSIKRLKDLEQQSQDGTFDKITKKEVLMLQREMAKLENSLGGIKNMGGLPDCLFVVDADHEHIAITEARNLGIPVVSIVDTNSNPDGVDYIIPGNDDAIRAVQLYLNSAADAVIEGREKNIEVQAEEGEFVEAAE.

Belongs to the universal ribosomal protein uS2 family.

This chain is Small ribosomal subunit protein uS2, found in Pseudoalteromonas atlantica (strain T6c / ATCC BAA-1087).